The chain runs to 1972 residues: Myosin-11 (1972 aa).

Phosphoserine occurs at positions 8, 23, and 40. In terms of domain architecture, Myosin N-terminal SH3-like spans 31–81 (VAKKLVWVPSEKQGFEAASIKEEKGDEVVVELVENGKKVTVGKDDIQKMNP). Positions 85 to 783 (SKVEDMAELT…VLAHLEEERD (699 aa)) constitute a Myosin motor domain. Lys129 bears the N6,N6,N6-trimethyllysine mark. ATP is bound at residue 178–185 (GESGAGKT). Actin-binding stretches follow at residues 661–683 (LGKL…IPNH) and 762–776 (RIGQ…GVLA). In terms of domain architecture, IQ spans 786 to 815 (ITDVIMAFQAMCRGYLARKAFTKRQQQLTA). Residues 844–1934 (LLQVTRQEEE…KSKLRRGNEA (1091 aa)) are a coiled coil. Thr1177 carries the phosphothreonine modification. Ser1684 and Ser1722 each carry phosphoserine. The segment covering 1771-1788 (NELATERSTAQKNESARQ) has biased composition (polar residues). Disordered regions lie at residues 1771 to 1797 (NELA…NKEL) and 1867 to 1972 (QYKE…KASE). A compositionally biased stretch (basic and acidic residues) spans 1867–1876 (QYKEQAEKGN). The tract at residues 1935–1972 (SFVPSRRAGGRRVIENTDGSEEEMDARDSDFNGTKASE) is C-terminal. At Thr1951 the chain carries Phosphothreonine. A phosphoserine mark is found at Ser1954 and Ser1971.

This sequence belongs to the TRAFAC class myosin-kinesin ATPase superfamily. Myosin family. As to quaternary structure, muscle myosin is a hexameric protein that consists of 2 heavy chain subunits (MHC), 2 alkali light chain subunits (MLC) and 2 regulatory light chain subunits (MLC-2).

It localises to the melanosome. It is found in the cytoplasm. The protein resides in the myofibril. Its function is as follows. Muscle contraction. This is Myosin-11 (Myh11) from Mus musculus (Mouse).